The chain runs to 510 residues: Fumarate hydratase, mitochondrial (510 aa).

A mitochondrion-targeting transit peptide spans 1–44; it reads MYRALWLLARSRRLVRPPASALASAPGLSGAAVPSFWPPNAARM. K61, K66, and K80 each carry N6-acetyllysine; alternate. An N6-succinyllysine; alternate mark is found at K61, K66, and K80. 2 positions are modified to phosphothreonine: T85 and T90. K94 bears the N6-acetyllysine mark. K115 and K122 each carry N6-acetyllysine; alternate. Residues K115 and K122 each carry the N6-succinyllysine; alternate modification. Substrate is bound by residues 145-147, 176-179, and 186-188; these read SGT, HPND, and SSN. Residue K213 is modified to N6-acetyllysine. The residue at position 223 (K223) is an N6-acetyllysine; alternate. K223 is subject to N6-succinyllysine; alternate. T234 provides a ligand contact to substrate. H235 acts as the Proton donor/acceptor in catalysis. T236 carries the phosphothreonine modification. K256 carries the post-translational modification N6-acetyllysine. At K292 the chain carries N6-acetyllysine; alternate. Position 292 is an N6-succinyllysine; alternate (K292). S365 is a catalytic residue. Substrate is bound by residues S366 and 371-373; that span reads KVN. S366 is modified (phosphoserine). 2 positions are modified to N6-succinyllysine: K467 and K473. K502 is subject to N6-acetyllysine.

The protein belongs to the class-II fumarase/aspartase family. Fumarase subfamily. As to quaternary structure, homotetramer. Interacts with H2AZ1. Phosphorylation at Thr-236 by PRKDC in response to DNA damage promotes translocation to the nucleus and recruitment to DNA double-strand breaks (DSBs).

The protein resides in the mitochondrion. Its subcellular location is the cytoplasm. It is found in the cytosol. The protein localises to the nucleus. It localises to the chromosome. The enzyme catalyses (S)-malate = fumarate + H2O. The protein operates within carbohydrate metabolism; tricarboxylic acid cycle; (S)-malate from fumarate: step 1/1. Functionally, catalyzes the reversible stereospecific interconversion of fumarate to L-malate. Experiments in other species have demonstrated that specific isoforms of this protein act in defined pathways and favor one direction over the other. In terms of biological role, catalyzes the hydration of fumarate to L-malate in the tricarboxylic acid (TCA) cycle to facilitate a transition step in the production of energy in the form of NADH. Catalyzes the dehydration of L-malate to fumarate. Fumarate metabolism in the cytosol plays a role during urea cycle and arginine metabolism; fumarate being a by-product of the urea cycle and amino-acid catabolism. Also plays a role in DNA repair by promoting non-homologous end-joining (NHEJ). In response to DNA damage and phosphorylation by PRKDC, translocates to the nucleus and accumulates at DNA double-strand breaks (DSBs): acts by catalyzing formation of fumarate, an inhibitor of KDM2B histone demethylase activity, resulting in enhanced dimethylation of histone H3 'Lys-36' (H3K36me2). In Macaca fascicularis (Crab-eating macaque), this protein is Fumarate hydratase, mitochondrial.